The sequence spans 392 residues: MYPGSGNYSYNNRPSMPPPGFNGDGQGYRQEYGNQYGGGYQQQQYQDQYQGENRGQYQGQYQDQPEYGRPPSGMVRPPSSIQQGNGQQFQYSQMTGRRKALLIGINYIGSKNALRGCINDAHNIFNYLTTYCGYRPEDIVMLTDDQREMVKIPLKENIIRAMQWLVKDAQPNDALFFHYSGHGGQTKDLDGDEEDGMDDVIYPVDFESVGPLIDDTMHDIMVKSLPQGARLTALFDSCHSGTVLDLPYTYSTKGVIKEPNMWKDVGSDGIQAAMAYATGNRSALFSSIGNMVSSVTKKQNVDRERVRQIKFSPADVIMLSGSKDNQTSADTFADGQNIGAMSHAFISVMTRQPQQSYLSLLQNLRNELAGKYSQKPQLSASHPIDVNLQFIM.

The segment covering 1 to 14 (MYPGSGNYSYNNRP) has biased composition (polar residues). The interval 1 to 87 (MYPGSGNYSY…PSSIQQGNGQ (87 aa)) is disordered. Over residues 41–51 (QQQQYQDQYQG) the composition is skewed to low complexity. A compositionally biased stretch (polar residues) spans 53–63 (NRGQYQGQYQD). Catalysis depends on residues His-182 and Cys-238.

This sequence belongs to the peptidase C14B family.

Involved in cell death (apoptosis). The chain is Metacaspase-1 (MCA1) from Candida glabrata (strain ATCC 2001 / BCRC 20586 / JCM 3761 / NBRC 0622 / NRRL Y-65 / CBS 138) (Yeast).